We begin with the raw amino-acid sequence, 867 residues long: MSGRGNLLSLFNKNAGNMGKSISSKDHEIDSGLDFNNSESSGERLLSSHNIETDLITTLQHVNISVGRGRARLIDTLKTDDHTSNQFITSESKENITKKTKGPESEAIASENGLFFPDLIYGSKGSSVNIYCNYLKLTTDESKGVFNYEVRFFPPIDSVHLRIKYLNDHKDKLGGTKTFDGNTLYLPILLPNKMTVFISKAEDVELQIRILYKKKEEMRNCTQLYNILFDRVMKVLNYVKFDRKQFDPSRPKIIPLAKLEVWPGYVTAVDEYKGGLMLCCDVSHRILCQKTVLEMLVDLYQQNVEHYQESARKMLVGNIVLTRYNNRTYKINDICFDQNPTCQFEIKTGCTSYVEYYKQYHNINIKDVNQPLIYSIKKSRGIPAERENLQFCLIPELCYLTGLRDEVRSDNKLMREIATFTRVSPNQRQMALNKFYENVSNTPAAQEILNSWGLSLTNNSNKISGRQMDIEQIYFSKISVSAGRSAEFSKHAVTNEMLKVVHLSKWIIIHLRNYRQAATSLLDNMKQACESLGMNISNPTMISLDHDRIDAYIQALRRNITMNTQMVVCICHNRRDDRYAAIKKICCSEIPIPSQVINAKTLQNDLKIRSVVQKIVLQMNCKLGGSLWTVKIPFKNVMICGIDSYHDPSNRGNSVAAFVASINSSYSQWYSKAVVQTKREEIVNGLSASFEIALKMYRKRNGKLPTNIIIYRDGIGDGQLYTCLNYEIPQFEMVCGNRIKISYIVVQKRINTRIFSGSGIHLENPLPGTVVDQHITKSNMYDFFLVSQLVRQGTVTPTHYVVLRDDCNYGPDIIQKLSYKLCFLYYNWAGTVRIPACCMYAHKLAYLIGQSIQRDVAEALSEKLFYL.

The segment at 1 to 83 (MSGRGNLLSL…IDTLKTDDHT (83 aa)) is necessary and sufficient for interaction with krimp. The segment at 1-289 (MSGRGNLLSL…CDVSHRILCQ (289 aa)) is interaction with papi. Symmetric dimethylarginine is present on residues arginine 4, arginine 68, and arginine 70. Residues 291-402 (TVLEMLVDLY…LIPELCYLTG (112 aa)) enclose the PAZ domain. In terms of domain architecture, Piwi spans 566–853 (MVVCICHNRR…LAYLIGQSIQ (288 aa)).

Belongs to the argonaute family. Piwi subfamily. As to quaternary structure, component of the ping-pong piRNA processing (4P) complex consisting of krimp, aub and AGO3. Interacts (via N-terminus when not methylated on arginine residues) with krimp (via non-canonical tudor domain); this interaction leads to symmetrical dimethylation on AGO3 arginine residues and its subsequent dissociation from krimp. Krimp associated AGO3 is mostly free of piRNA binding and the interaction plays an important role in the loading of AGO3 with piRNAs; piRNA binding may stimulate dissociation of the two proteins. May form part of a piRNA processing complex consisting of tud, aub and AGO3. Interacts (when symmetrically dimethylated on arginine residues) with tud. Forms a complex with smg, twin, aub, nos mRNA and piRNAs that target the nos 3'-untranslated region, in early embryos. Interacts (via the N-terminal region when symmetrically methylated on arginine residues) with papi (via C-terminus); this interaction is RNA-independent and may be required for AGO3 localization to the nuage. Interacts with TER94 and tral. Post-translationally, symmetrically dimethylated on Arg-4, Arg-68 and Arg-70, most likely by csul/PRMT5/DART5. Methylation state probably functions as an indicator of its piRNA binding state. In terms of tissue distribution, in ovary, expressed in germline stem cells, germline cyst cells, nurse cells and oocytes during early stages. Also found in the somatic cap cells of the germarium. In testis, expressed in germline stem cells, primary gonial cells and early spermatocytes. No expression detected in the somatic hub cells at the apical tip of the testis (at protein level). Expressed in neurons throughout the adult brain and in the mushroom body subdivision in the peduncle. In the mushroom body, expressed only in gamma and core alpha-beta neurons.

The protein resides in the cytoplasm. It is found in the perinuclear region. It localises to the cytoplasmic ribonucleoprotein granule. Its function is as follows. Component of the perinuclear meiotic nuage, a germline-specific subcellular membraneless ribonucleoprotein compartment involved in production of transposable element-repressing Piwi-interacting RNA (piRNA)-induced silencing complexes (piRISCs), which are essential for maintaining germline integrity during oogenesis. Acts via the Piwi-interacting RNA (piRNA) metabolic process, which mediates the repression of transposable elements during meiosis by forming complexes composed of piRNAs and Piwi proteins and governs the methylation and subsequent repression of transposons. Piwi protein that directly binds piRNAs, a class of 24 to 30 nucleotide RNAs that are generated by a Dicer-independent mechanism and are primarily derived from transposons and other repeated sequence elements. Associates predominantly with sense piRNAs that contain adenine at nucleotide 10, but shows no preference for uridine at the 5' end. Shows RNA cleavage or slicer activity. Together with Piwi protein aub recruited to subregions of the perinuclear nuage by krimp, which coordinates their activity in the ping-pong amplification step of secondary piRNA biogenesis. Krimp recruits piRNA bound aub and unbound AGO3, bringing them into close proximity to facilitate the loading onto AGO3 of freshly cut piRNAs generated by aub cleavage of target sequences; krimp recognizes the piRNA loading state of the Piwi proteins via symmetrically dimethylated arginine modification in their N-terminus. Important for asymmetric ping-pong amplification to bias production towards antisense piRNAs capable of silencing transposable elements. In testis, associates with Su(Ste) and AT-chX-1 piRNAs mostly produced from antisense precursors. In the germline, acts to amplify pools of antisense piRNAs, among others Su(Ste), AT-chX-1 and roo, and to limit sense piRNA accumulation. Forms a complex with smg, twin, aub and specific piRNAs that targets nos mRNA (and probably other maternal mRNAS) for deadenylation promoting its decay during early embryogenesis. Involved in transposon silencing in the adult brain. This is Protein argonaute-3 from Drosophila melanogaster (Fruit fly).